Consider the following 818-residue polypeptide: Serine/threonine-protein phosphatase 4 regulatory subunit 3 (818 aa).

Positions Met-1–Val-100 constitute a WH1 domain. Acidic residues predominate over residues Phe-670–Glu-681. A disordered region spans residues Phe-670–Ser-818. Basic and acidic residues predominate over residues Phe-703–Leu-718. Residues Ser-729–Ala-775 show a composition bias toward low complexity. Phosphoserine occurs at positions 769 and 770. Residues Tyr-788–Ser-803 are compositionally biased toward acidic residues.

This sequence belongs to the SMEK family. As to quaternary structure, serine/threonine-protein phosphatase 4 (PP4) occurs in different assemblies of the catalytic and one or more regulatory subunits.

Regulatory subunit of serine/threonine-protein phosphatase 4. This is Serine/threonine-protein phosphatase 4 regulatory subunit 3 (smek1) from Danio rerio (Zebrafish).